The sequence spans 98 residues: NADH-ubiquinone oxidoreductase chain 4L (98 aa).

The next 3 helical transmembrane spans lie at 1–21, 26–46, and 61–81; these read MSPI…GMLV, LMAS…TIAL, and ITLL…LVSI.

It belongs to the complex I subunit 4L family. Core subunit of respiratory chain NADH dehydrogenase (Complex I) which is composed of 45 different subunits.

Its subcellular location is the mitochondrion inner membrane. The catalysed reaction is a ubiquinone + NADH + 5 H(+)(in) = a ubiquinol + NAD(+) + 4 H(+)(out). Its function is as follows. Core subunit of the mitochondrial membrane respiratory chain NADH dehydrogenase (Complex I) which catalyzes electron transfer from NADH through the respiratory chain, using ubiquinone as an electron acceptor. Part of the enzyme membrane arm which is embedded in the lipid bilayer and involved in proton translocation. The protein is NADH-ubiquinone oxidoreductase chain 4L (MT-ND4L) of Chlorocebus aethiops (Green monkey).